Reading from the N-terminus, the 386-residue chain is Methylthioribose-1-phosphate isomerase (386 aa).

Aspartate 255 acts as the Proton donor in catalysis.

Belongs to the eIF-2B alpha/beta/delta subunits family. MtnA subfamily.

It localises to the cytoplasm. The protein localises to the nucleus. The catalysed reaction is 5-(methylsulfanyl)-alpha-D-ribose 1-phosphate = 5-(methylsulfanyl)-D-ribulose 1-phosphate. The protein operates within amino-acid biosynthesis; L-methionine biosynthesis via salvage pathway; L-methionine from S-methyl-5-thio-alpha-D-ribose 1-phosphate: step 1/6. Its function is as follows. Catalyzes the interconversion of methylthioribose-1-phosphate (MTR-1-P) into methylthioribulose-1-phosphate (MTRu-1-P). The chain is Methylthioribose-1-phosphate isomerase from Trypanosoma brucei brucei (strain 927/4 GUTat10.1).